Here is a 441-residue protein sequence, read N- to C-terminus: C-terminal-binding protein 1 (441 aa).

The tract at residues 1–70 (MGSSHLLNKG…EIHEKVLNEA (70 aa)) is interaction with GLIS2 1. Residues Ser100, 180 to 185 (IGLGRV), Asp204, 237 to 243 (CGLNEHN), 264 to 266 (TAR), and Asp290 each bind NAD(+). The active site involves Arg266. The tract at residues 288–360 (ALDVHESEPF…VNKDHLTAAT (73 aa)) is interaction with GLIS2 2. Glu295 is a catalytic residue. Ser300 carries the phosphoserine modification. His315 acts as the Proton donor in catalysis. 315–318 (HAAW) lines the NAD(+) pocket. The segment at 409–441 (SHGLPPVAHPPHAPSPGQTVKPEADRDHTSDQL) is disordered. The residue at position 423 (Ser423) is a Phosphoserine. Lys429 is covalently cross-linked (Glycyl lysine isopeptide (Lys-Gly) (interchain with G-Cter in SUMO)). The segment covering 430–441 (PEADRDHTSDQL) has biased composition (basic and acidic residues).

This sequence belongs to the D-isomer specific 2-hydroxyacid dehydrogenase family. Homo- or heterodimer. Heterodimer with CTBP2. Interacts with ELK3 (via its PXDLS motif). Interacts with RBBP8 (via its PXDLS motif). Interacts with PNN, MECOM and ZFHX1B. Interacts with ZNF366 (via PXDLS motif). Interaction with SATB1 (non-acetylated form); the interaction stabilizes its attachment to DNA and promotes transcription repression. Interacts with PRDM16; the interaction represses white adipose tissue (WAT)-specific genes expression. Interacts with GLIS2, HIPK2, FOXP1, FOXP2, HDAC4, HDAC5, HDAC9, NRIP1, WIZ and ZNF217. Interacts with BCL6; the interaction is required for BCL6 transcriptional autoinhibition and inhibition of some BCL6 target genes. Interacts with IKZF4. Interacts with MCRIP1 (unphosphorylated form, via the PXDLS motif); competitively inhibiting CTBP-ZEB1 interaction. Interacts with Bassoon/BSN; this interaction targets and anchors CTBP1 to presynapses. Interacts with SIMC1. Requires NAD(+) as cofactor. ADP-ribosylated; when cells are exposed to brefeldin A. In terms of processing, the level of phosphorylation appears to be regulated during the cell cycle. Phosphorylation by HIPK2 on Ser-423 induces proteasomal degradation. Post-translationally, sumoylation on Lys-429 is promoted by the E3 SUMO-protein ligase CBX4. In terms of tissue distribution, expressed in a wide range of adult tissues.

Its subcellular location is the cytoplasm. The protein resides in the nucleus. Corepressor targeting diverse transcription regulators such as GLIS2 or BCL6. Has dehydrogenase activity. Involved in controlling the equilibrium between tubular and stacked structures in the Golgi complex. Functions in brown adipose tissue (BAT) differentiation. The sequence is that of C-terminal-binding protein 1 (Ctbp1) from Mus musculus (Mouse).